Here is a 325-residue protein sequence, read N- to C-terminus: Putative 1-aminocyclopropane-1-carboxylate deaminase (325 aa).

Position 54 is an N6-(pyridoxal phosphate)lysine (lysine 54).

It belongs to the ACC deaminase/D-cysteine desulfhydrase family. Requires pyridoxal 5'-phosphate as cofactor.

It catalyses the reaction 1-aminocyclopropane-1-carboxylate + H2O = 2-oxobutanoate + NH4(+). The polypeptide is Putative 1-aminocyclopropane-1-carboxylate deaminase (Pyrococcus horikoshii (strain ATCC 700860 / DSM 12428 / JCM 9974 / NBRC 100139 / OT-3)).